Here is a 411-residue protein sequence, read N- to C-terminus: Na(+)-translocating NADH-quinone reductase subunit F (411 aa).

A helical transmembrane segment spans residues 6–26 (AIGGVAMFTLIIMSFVAIILA). In terms of domain architecture, 2Fe-2S ferredoxin-type spans 35-129 (GDVTIHINDN…DMKIEIDPEF (95 aa)). [2Fe-2S] cluster-binding residues include cysteine 72, cysteine 78, cysteine 81, and cysteine 113. Positions 132–273 (VQKWECEVIS…SGPYGEFFAK (142 aa)) constitute an FAD-binding FR-type domain.

It belongs to the NqrF family. In terms of assembly, composed of six subunits; NqrA, NqrB, NqrC, NqrD, NqrE and NqrF. [2Fe-2S] cluster is required as a cofactor. It depends on FAD as a cofactor.

The protein resides in the cell inner membrane. The catalysed reaction is a ubiquinone + n Na(+)(in) + NADH + H(+) = a ubiquinol + n Na(+)(out) + NAD(+). Functionally, NQR complex catalyzes the reduction of ubiquinone-1 to ubiquinol by two successive reactions, coupled with the transport of Na(+) ions from the cytoplasm to the periplasm. The first step is catalyzed by NqrF, which accepts electrons from NADH and reduces ubiquinone-1 to ubisemiquinone by a one-electron transfer pathway. The protein is Na(+)-translocating NADH-quinone reductase subunit F of Psychrobacter arcticus (strain DSM 17307 / VKM B-2377 / 273-4).